The primary structure comprises 260 residues: Ribosomal RNA small subunit methyltransferase J (260 aa).

S-adenosyl-L-methionine is bound by residues 125–126 (ER) and aspartate 179. The segment at 234-260 (IDGPKPSHALDGKSSRYDIYPKKALKP) is disordered. Basic and acidic residues predominate over residues 241-254 (HALDGKSSRYDIYP).

It belongs to the methyltransferase superfamily. RsmJ family.

It localises to the cytoplasm. It catalyses the reaction guanosine(1516) in 16S rRNA + S-adenosyl-L-methionine = N(2)-methylguanosine(1516) in 16S rRNA + S-adenosyl-L-homocysteine + H(+). Functionally, specifically methylates the guanosine in position 1516 of 16S rRNA. The chain is Ribosomal RNA small subunit methyltransferase J from Pseudomonas fluorescens (strain SBW25).